Consider the following 513-residue polypeptide: Cobyric acid synthase (513 aa).

The GATase cobBQ-type domain maps to lysine 252–isoleucine 457. The Nucleophile role is filled by cysteine 333. Histidine 449 is a catalytic residue.

This sequence belongs to the CobB/CobQ family. CobQ subfamily.

The protein operates within cofactor biosynthesis; adenosylcobalamin biosynthesis. Functionally, catalyzes amidations at positions B, D, E, and G on adenosylcobyrinic A,C-diamide. NH(2) groups are provided by glutamine, and one molecule of ATP is hydrogenolyzed for each amidation. The chain is Cobyric acid synthase from Lachnoclostridium phytofermentans (strain ATCC 700394 / DSM 18823 / ISDg) (Clostridium phytofermentans).